The primary structure comprises 48 residues: Large ribosomal subunit protein bL33A (48 aa).

This sequence belongs to the bacterial ribosomal protein bL33 family.

This chain is Large ribosomal subunit protein bL33A, found in Metamycoplasma arthritidis (strain 158L3-1) (Mycoplasma arthritidis).